A 138-amino-acid chain; its full sequence is Ig heavy chain V region TEPC 1017 (138 aa).

The signal sequence occupies residues 1–20 (MGWSYIILFLVATATDVHSQ). A framework-1 region spans residues 21–49 (VQLQQPGAELVKPGASVQLSCKASGHTFT). Cys-41 and Cys-115 are joined by a disulfide. The interval 50–54 (NYWIH) is complementarity-determining-1. Positions 55–68 (WVKQRPGQGLEWIG) are framework-2. The segment at 69–85 (EINPNDGRSNYNEKFKN) is complementarity-determining-2. Positions 86-117 (KATLTVDKSSSTAYMQLSSLTPEEFAVYYCAR) are framework-3. The complementarity-determining-3 stretch occupies residues 118 to 127 (SDGYYDWFVY). Residues 128-138 (WGQGTLVTFSA) are framework-4.

The sequence is that of Ig heavy chain V region TEPC 1017 from Mus musculus (Mouse).